Consider the following 357-residue polypeptide: Sorbitol dehydrogenase (357 aa).

An N-acetylalanine modification is found at A2. C45 is a binding site for Zn(2+). Y51 is a binding site for substrate. Zn(2+)-binding residues include H70 and E71. E156 serves as a coordination point for substrate. The NAD(+) site is built by I184, D204, and R209. A phosphoserine mark is found at S211 and S225. NAD(+)-binding positions include 273-275 and 297-299; these read VGL and VFR. 2 residues coordinate substrate: R299 and Y300.

The protein belongs to the zinc-containing alcohol dehydrogenase family. In terms of assembly, homotetramer. Zn(2+) is required as a cofactor.

The protein resides in the mitochondrion membrane. Its subcellular location is the cell projection. It localises to the cilium. It is found in the flagellum. The catalysed reaction is xylitol + NAD(+) = D-xylulose + NADH + H(+). The enzyme catalyses L-iditol + NAD(+) = keto-L-sorbose + NADH + H(+). It catalyses the reaction keto-D-fructose + NADH + H(+) = D-sorbitol + NAD(+). Polyol dehydrogenase that catalyzes the reversible NAD(+)-dependent oxidation of various sugar alcohols. Is active with xylitol, L-iditol and D-sorbitol (D-glucitol) as substrates, leading to the C2-oxidized products D-xylulose, L-sorbose and D-fructose, respectively. Is a key enzyme in the polyol pathway that interconverts glucose and fructose via sorbitol, which constitutes an important alternate route for glucose metabolism. May play a role in sperm motility by using sorbitol as an alternative energy source for sperm motility. The protein is Sorbitol dehydrogenase (SORD) of Pongo abelii (Sumatran orangutan).